The following is a 513-amino-acid chain: ATP synthase subunit alpha (513 aa).

169–176 (GDRQIGKS) contributes to the ATP binding site.

The protein belongs to the ATPase alpha/beta chains family. In terms of assembly, F-type ATPases have 2 components, CF(1) - the catalytic core - and CF(0) - the membrane proton channel. CF(1) has five subunits: alpha(3), beta(3), gamma(1), delta(1), epsilon(1). CF(0) has three main subunits: a(1), b(2) and c(9-12). The alpha and beta chains form an alternating ring which encloses part of the gamma chain. CF(1) is attached to CF(0) by a central stalk formed by the gamma and epsilon chains, while a peripheral stalk is formed by the delta and b chains.

The protein localises to the cell inner membrane. It carries out the reaction ATP + H2O + 4 H(+)(in) = ADP + phosphate + 5 H(+)(out). Produces ATP from ADP in the presence of a proton gradient across the membrane. The alpha chain is a regulatory subunit. The polypeptide is ATP synthase subunit alpha (Colwellia psychrerythraea (strain 34H / ATCC BAA-681) (Vibrio psychroerythus)).